The sequence spans 344 residues: DNA fragmentation factor subunit beta (344 aa).

The 77-residue stretch at 7–83 (QPKCVKLRAL…LLTAGETWHG (77 aa)) folds into the CIDE-N domain.

Heterodimer of DFFA and DFFB. Interacts with H1-1.

Its subcellular location is the cytoplasm. It localises to the nucleus. Inhibited by DFFA (DFF45). In terms of biological role, nuclease that induces DNA fragmentation and chromatin condensation during apoptosis. Degrades naked DNA and induces apoptotic morphology. The polypeptide is DNA fragmentation factor subunit beta (Dffb) (Mus musculus (Mouse)).